Reading from the N-terminus, the 275-residue chain is NADH-quinone oxidoreductase subunit E 1 (275 aa).

4 residues coordinate [2Fe-2S] cluster: Cys-99, Cys-104, Cys-140, and Cys-144. Positions 200–275 are disordered; it reads LQAPEPVEEK…DKSKPAKKPR (76 aa). Residues 206–221 show a composition bias toward basic and acidic residues; that stretch reads VEEKKSVRASKAKDEQ. Residues 231–242 show a composition bias toward polar residues; the sequence is AKPSTATDVTNP. A compositionally biased stretch (low complexity) spans 243 to 256; that stretch reads TLKTPATARKAAAK. Basic and acidic residues predominate over residues 258 to 269; that stretch reads VKIEGETVDKSK.

The protein belongs to the complex I 24 kDa subunit family. Requires [2Fe-2S] cluster as cofactor.

The enzyme catalyses a quinone + NADH + 5 H(+)(in) = a quinol + NAD(+) + 4 H(+)(out). Functionally, NDH-1 shuttles electrons from NADH, via FMN and iron-sulfur (Fe-S) centers, to quinones in the respiratory chain. The immediate electron acceptor for the enzyme in this species is believed to be ubiquinone. Couples the redox reaction to proton translocation (for every two electrons transferred, four hydrogen ions are translocated across the cytoplasmic membrane), and thus conserves the redox energy in a proton gradient. In Rhizobium meliloti (strain 1021) (Ensifer meliloti), this protein is NADH-quinone oxidoreductase subunit E 1 (nuoE1).